Consider the following 150-residue polypeptide: UPF0735 ACT domain-containing protein Helmi_18680 (150 aa).

In terms of domain architecture, ACT spans 72–147 (SVSLLLEHHP…GVRSAQLVGS (76 aa)).

Belongs to the UPF0735 family.

This is UPF0735 ACT domain-containing protein Helmi_18680 from Heliobacterium modesticaldum (strain ATCC 51547 / Ice1).